Here is a 528-residue protein sequence, read N- to C-terminus: GMP synthase [glutamine-hydrolyzing] (528 aa).

Positions 13 to 204 constitute a Glutamine amidotransferase type-1 domain; that stretch reads SILILDFGSQ…VYSISKCKAD (192 aa). Residue Cys90 is the Nucleophile of the active site. Residues His178 and Glu180 contribute to the active site. Residues 205–403 form the GMPS ATP-PPase domain; sequence WNTETFLEET…LGLPDEIIKR (199 aa). 232 to 238 lines the ATP pocket; that stretch reads SGGVDSS.

As to quaternary structure, homodimer.

It catalyses the reaction XMP + L-glutamine + ATP + H2O = GMP + L-glutamate + AMP + diphosphate + 2 H(+). It participates in purine metabolism; GMP biosynthesis; GMP from XMP (L-Gln route): step 1/1. Functionally, catalyzes the synthesis of GMP from XMP. The polypeptide is GMP synthase [glutamine-hydrolyzing] (Prochlorococcus marinus (strain MIT 9515)).